Here is a 33-residue protein sequence, read N- to C-terminus: Cytochrome b6-f complex subunit 8 (33 aa).

Residues 2 to 22 traverse the membrane as a helical segment; that stretch reads LFTVAWASLAAMFSFSIAMVV.

It belongs to the PetN family. In terms of assembly, the 4 large subunits of the cytochrome b6-f complex are cytochrome b6, subunit IV (17 kDa polypeptide, PetD), cytochrome f and the Rieske protein, while the 4 small subunits are PetG, PetL, PetM and PetN. The complex functions as a dimer.

The protein localises to the cellular thylakoid membrane. Its function is as follows. Component of the cytochrome b6-f complex, which mediates electron transfer between photosystem II (PSII) and photosystem I (PSI), cyclic electron flow around PSI, and state transitions. The sequence is that of Cytochrome b6-f complex subunit 8 from Parasynechococcus marenigrum (strain WH8102).